Here is a 515-residue protein sequence, read N- to C-terminus: Maturase K (515 aa).

Belongs to the intron maturase 2 family. MatK subfamily.

The protein resides in the plastid. The protein localises to the chloroplast. In terms of biological role, usually encoded in the trnK tRNA gene intron. Probably assists in splicing its own and other chloroplast group II introns. In Pinus uncinata (Mountain pine), this protein is Maturase K.